The primary structure comprises 557 residues: Formate--tetrahydrofolate ligase (557 aa).

65-72 (TPAGEGKT) lines the ATP pocket.

It belongs to the formate--tetrahydrofolate ligase family.

The catalysed reaction is (6S)-5,6,7,8-tetrahydrofolate + formate + ATP = (6R)-10-formyltetrahydrofolate + ADP + phosphate. The protein operates within one-carbon metabolism; tetrahydrofolate interconversion. The polypeptide is Formate--tetrahydrofolate ligase (Zymomonas mobilis subsp. mobilis (strain ATCC 31821 / ZM4 / CP4)).